The chain runs to 609 residues: Glutamine--fructose-6-phosphate aminotransferase [isomerizing] (609 aa).

Residue cysteine 2 is the Nucleophile; for GATase activity of the active site. Positions 2–218 constitute a Glutamine amidotransferase type-2 domain; it reads CGIVGAIAQR…EGDIAEITRR (217 aa). SIS domains lie at 286 to 426 and 458 to 599; these read ADEL…LKGL and LAED…VDQP. Lysine 604 serves as the catalytic For Fru-6P isomerization activity.

Homodimer.

The protein resides in the cytoplasm. The enzyme catalyses D-fructose 6-phosphate + L-glutamine = D-glucosamine 6-phosphate + L-glutamate. In terms of biological role, catalyzes the first step in hexosamine metabolism, converting fructose-6P into glucosamine-6P using glutamine as a nitrogen source. The protein is Glutamine--fructose-6-phosphate aminotransferase [isomerizing] of Salmonella typhimurium (strain LT2 / SGSC1412 / ATCC 700720).